A 288-amino-acid chain; its full sequence is Serpentine receptor class gamma-1 (288 aa).

7 helical membrane passes run 25–45 (LFLQLCYLTPSALFLSRVIYI), 59–79 (FYTIFLADCVTGFILVNFSIF), 118–138 (FQILVQILFVANRASCVLWPL), 148–168 (LKSILTTMAISPCLWIWTIAI), 197–217 (FSILRLTSVITIVVATTTMLI), 238–258 (VYLSVCYLLPAIAEFEYFLVL), and 268–288 (ILHGLVVICWDIQNICSTYVM).

It belongs to the nematode receptor-like protein srg family.

It is found in the membrane. This is Serpentine receptor class gamma-1 (srg-1) from Caenorhabditis elegans.